A 405-amino-acid polypeptide reads, in one-letter code: Histone deacetylase clr6 (405 aa).

The interval 6–318 (KKVSYFYDED…WTYETGLLAG (313 aa)) is histone deacetylase. The active site involves histidine 138.

It belongs to the histone deacetylase family. HD type 1 subfamily. In terms of assembly, heterotetramer of alp13, clr6, prw1 and pst2.

The protein resides in the nucleus. It carries out the reaction N(6)-acetyl-L-lysyl-[histone] + H2O = L-lysyl-[histone] + acetate. Responsible for the deacetylation of lysine residues on the N-terminal part of the core histones (H2A, H2B, H3 and H4). Histone deacetylation gives a tag for epigenetic repression and plays an important role in transcriptional regulation, cell cycle progression and developmental events. Histone deacetylases act via the formation of large multiprotein complexes. Has a role in chromatin assembly and chromosome segregation. This is Histone deacetylase clr6 (clr6) from Schizosaccharomyces pombe (strain 972 / ATCC 24843) (Fission yeast).